The chain runs to 150 residues: Large ribosomal subunit protein uL13 (150 aa).

Residues 128–150 (GSDHPHSAQEPKILSLNSESVTK) form a disordered region.

The protein belongs to the universal ribosomal protein uL13 family. As to quaternary structure, part of the 50S ribosomal subunit.

In terms of biological role, this protein is one of the early assembly proteins of the 50S ribosomal subunit, although it is not seen to bind rRNA by itself. It is important during the early stages of 50S assembly. The polypeptide is Large ribosomal subunit protein uL13 (Prochlorococcus marinus (strain NATL1A)).